The chain runs to 218 residues: Adenylate kinase (218 aa).

An ATP-binding site is contributed by 10–15; that stretch reads GAGKGT. An NMP region spans residues 30–59; that stretch reads STGDMLRAAVKAGSPLGLKVKDIMTSGGLV. Residues Thr31, Arg36, 57–59, 85–88, and Gln92 each bind AMP; these read GLV and GFPR. The tract at residues 122-159 is LID; it reads GRRVHEASGRVYHVKHNAPKTEGVDDETGEPLVQRDDD. ATP-binding positions include Arg123 and 132–133; that span reads VY. Residues Arg156 and Arg167 each contribute to the AMP site. Residue Gly203 coordinates ATP.

This sequence belongs to the adenylate kinase family. Monomer.

The protein localises to the cytoplasm. The catalysed reaction is AMP + ATP = 2 ADP. It functions in the pathway purine metabolism; AMP biosynthesis via salvage pathway; AMP from ADP: step 1/1. Functionally, catalyzes the reversible transfer of the terminal phosphate group between ATP and AMP. Plays an important role in cellular energy homeostasis and in adenine nucleotide metabolism. This chain is Adenylate kinase, found in Saccharophagus degradans (strain 2-40 / ATCC 43961 / DSM 17024).